The chain runs to 156 residues: Ribosomal RNA large subunit methyltransferase H (156 aa).

S-adenosyl-L-methionine-binding positions include G104 and 123-128 (LSALTL).

Belongs to the RNA methyltransferase RlmH family. Homodimer.

The protein localises to the cytoplasm. The enzyme catalyses pseudouridine(1915) in 23S rRNA + S-adenosyl-L-methionine = N(3)-methylpseudouridine(1915) in 23S rRNA + S-adenosyl-L-homocysteine + H(+). Functionally, specifically methylates the pseudouridine at position 1915 (m3Psi1915) in 23S rRNA. In Nitrosospira multiformis (strain ATCC 25196 / NCIMB 11849 / C 71), this protein is Ribosomal RNA large subunit methyltransferase H.